A 461-amino-acid polypeptide reads, in one-letter code: Cysteine--tRNA ligase (461 aa).

Cys31 lines the Zn(2+) pocket. Positions Pro33–Asn43 match the 'HIGH' region motif. The Zn(2+) site is built by Cys219, His244, and Glu248. Positions Lys277 to Ser281 match the 'KMSKS' region motif. Lys280 provides a ligand contact to ATP. Basic and acidic residues predominate over residues Ser436–Glu452. Residues Ser436–Arg461 are disordered.

Belongs to the class-I aminoacyl-tRNA synthetase family. In terms of assembly, monomer. Zn(2+) serves as cofactor.

It is found in the cytoplasm. The catalysed reaction is tRNA(Cys) + L-cysteine + ATP = L-cysteinyl-tRNA(Cys) + AMP + diphosphate. The sequence is that of Cysteine--tRNA ligase from Agrobacterium fabrum (strain C58 / ATCC 33970) (Agrobacterium tumefaciens (strain C58)).